A 350-amino-acid polypeptide reads, in one-letter code: Alcohol dehydrogenase 1 (350 aa).

Zn(2+)-binding residues include Cys46, His69, Cys100, Cys103, Cys106, Cys114, and Cys156. NAD(+) is bound by residues 180–186 (GAAGGLG), Asp204, Lys209, 271–273 (VGL), and Arg343.

The protein belongs to the zinc-containing alcohol dehydrogenase family. Homotetramer. The cofactor is Zn(2+).

It is found in the cytoplasm. The enzyme catalyses a primary alcohol + NAD(+) = an aldehyde + NADH + H(+). It catalyses the reaction a secondary alcohol + NAD(+) = a ketone + NADH + H(+). The polypeptide is Alcohol dehydrogenase 1 (ADH1) (Kluyveromyces lactis (strain ATCC 8585 / CBS 2359 / DSM 70799 / NBRC 1267 / NRRL Y-1140 / WM37) (Yeast)).